Consider the following 82-residue polypeptide: Small ribosomal subunit protein uS17c (82 aa).

Belongs to the universal ribosomal protein uS17 family. Part of the 30S ribosomal subunit.

Its subcellular location is the plastid. It is found in the chloroplast. One of the primary rRNA binding proteins, it binds specifically to the 5'-end of 16S ribosomal RNA. The sequence is that of Small ribosomal subunit protein uS17c (rps17) from Cyanidioschyzon merolae (strain NIES-3377 / 10D) (Unicellular red alga).